Here is a 387-residue protein sequence, read N- to C-terminus: EARP and GARP complex-interacting protein 1 (387 aa).

An N-acetylmethionine modification is found at M1. 4 WD repeats span residues 132–172 (TAHS…SQAV), 180–222 (GGKG…QIYC), 226–266 (AHGQ…EPVK), and 270–310 (EHSH…SEPF). Residues 310 to 334 (FGHLVDDDDISDQEDHRSEEKSKEP) are disordered. S320 bears the Phosphoserine mark. The span at 322–334 (QEDHRSEEKSKEP) shows a compositional bias: basic and acidic residues. The stretch at 345–385 (EHEDSVYAVDWSSADPWLFASLSYDGRLVINRVPRALKYHI) is one WD 5 repeat.

It belongs to the WD repeat EIPR1 family. In terms of assembly, interacts with two multisubunit tethering complexes: EARP composed of VPS50, VPS51, VPS52 and VPS53 subunits and GARP complex composed of VPS51, VPS52, VPS53 and VPS54 subunits. Interacts with SNAP29.

It is found in the golgi apparatus. The protein resides in the trans-Golgi network. In terms of biological role, acts as a component of endosomal retrieval machinery that is involved in protein transport from early endosomes to either recycling endosomes or the trans-Golgi network. Mediates the recruitment of Golgi-associated retrograde protein (GARP) complex to the trans-Golgi network and controls early endosome-to-Golgi transport of internalized protein. Promotes the recycling of internalized transferrin receptor (TFRC) to the plasma membrane through interaction with endosome-associated recycling protein (EARP) complex. Controls proper insulin distribution and secretion, and retention of cargo in mature dense core vesicles. Required for the stability of the endosome-associated retrograde protein (EARP) complex subunits and for proper localization and association of EARP with membranes. In Macaca fascicularis (Crab-eating macaque), this protein is EARP and GARP complex-interacting protein 1.